We begin with the raw amino-acid sequence, 173 residues long: MDVTIQHPWFKRPLGPFYPSRLFDQFFGEGLFEYDLLPFLSSTISPYYRQSLFRTVLDSGVSEVRSDRDKFVIFLDVKHFSPEDLTVKVQEDFVEIHGKHNERQDDHGYISREFHRRYRLPSNVDQSALSCSVSADGMLTFSGPKVQSGLDAGHSERAIPVSREEKPSSAPSS.

Met-1 is modified (N-acetylmethionine). Positions 1 to 63 (MDVTIQHPWF…RTVLDSGVSE (63 aa)) are required for complex formation with BFSP1 and BFSP2. Deamidated glutamine; partial is present on Gln-6. At Ser-45 the chain carries Phosphoserine. The residue at position 50 (Gln-50) is a Deamidated glutamine; partial. Positions 52 to 162 (LFRTVLDSGV…GHSERAIPVS (111 aa)) constitute a sHSP domain. Lys-70 is modified (N6-acetyllysine). Gln-90 carries the deamidated glutamine; partial modification. The residue at position 99 (Lys-99) is an N6-acetyllysine. Residue His-100 coordinates Zn(2+). Deamidated asparagine; partial is present on Asn-101. Residues Glu-102 and His-107 each contribute to the Zn(2+) site. At Ser-122 the chain carries Phosphoserine. A Deamidated asparagine; partial modification is found at Asn-123. The segment at 144–173 (PKVQSGLDAGHSERAIPVSREEKPSSAPSS) is disordered. Gln-147 is modified (deamidated glutamine; partial). Basic and acidic residues predominate over residues 153-167 (GHSERAIPVSREEKP). His-154 contacts Zn(2+). A glycan (O-linked (GlcNAc) serine) is linked at Ser-162.

The protein belongs to the small heat shock protein (HSP20) family. As to quaternary structure, heteromer composed of three CRYAA and one CRYAB subunits. Inter-subunit bridging via zinc ions enhances stability, which is crucial as there is no protein turn over in the lens. Can also form homodimers and homotetramers (dimers of dimers) which serve as the building blocks of homooligomers. Within homooligomers, the zinc-binding motif is created from residues of 3 different molecules. His-100 and Glu-102 from one molecule are ligands of the zinc ion, and His-107 and His-154 residues from additional molecules complete the site with tetrahedral coordination geometry. Part of a complex required for lens intermediate filament formation composed of BFSP1, BFSP2 and CRYAA. Acetylation at Lys-70 may increase chaperone activity. In terms of processing, undergoes age-dependent proteolytical cleavage at the C-terminus.

It localises to the cytoplasm. It is found in the nucleus. Functionally, contributes to the transparency and refractive index of the lens. Acts as a chaperone, preventing aggregation of various proteins under a wide range of stress conditions. Required for the correct formation of lens intermediate filaments as part of a complex composed of BFSP1, BFSP2 and CRYAA. This is Alpha-crystallin A chain (CRYAA) from Otolemur crassicaudatus (Brown greater galago).